Consider the following 755-residue polypeptide: Glucosylglycerol-phosphate synthase (755 aa).

Belongs to the glycosyltransferase 20 family.

The enzyme catalyses ADP-alpha-D-glucose + sn-glycerol 3-phosphate = 2-O-(alpha-D-glucopyranosyl)-sn-glycerol 3-phosphate + ADP + H(+). Its pathway is glycan metabolism; glucosylglycerol biosynthesis. Involved in salt tolerance by producing GG-phosphate from ADP-glucose and glycerol-3-phosphate (G3P), an intermediate in the synthesis of the osmolyte glucosylglycerol (GG). The sequence is that of Glucosylglycerol-phosphate synthase (ggpS) from Pseudomonas anguilliseptica.